Consider the following 320-residue polypeptide: MKKIAILTSGGDAPGMNAAIRAVVRTAIDKGLEVMGVQRGYSGLLNGELFAMNRTSVSDIIQRGGTILRTARCPEFKDEEVRKRAVKILNAYGVDALVVIGGDGSFMGAKLLSKLGIKTIGLPGTIDNDLAYTDFTIGFDTALNTIVDAINKIRDTSTSHERVSIIEVMGRDCGDLALHAGISSGAEAIIVPEMGEFDRDALCRTILEGKNHGKTHSIVILAEGIGGAEELSKYVQELTGIEARATILGHIQRGGAPSASDRVLASRLGARAVEVLLQGETSRVIGIRDNQIIDQDIDEALAMESKFDLDLYNVAEVLSR.

Gly-11 contributes to the ATP binding site. 21 to 25 (RAVVR) provides a ligand contact to ADP. Residues 72-73 (RC) and 102-105 (GDGS) contribute to the ATP site. A Mg(2+)-binding site is contributed by Asp-103. Position 125-127 (125-127 (TID)) interacts with substrate. Catalysis depends on Asp-127, which acts as the Proton acceptor. Arg-154 serves as a coordination point for ADP. Residues Arg-162 and 169-171 (MGR) contribute to the substrate site. ADP-binding positions include 185-187 (GAE) and 214-216 (KTH). Substrate-binding positions include Glu-223, Arg-244, and 250–253 (HIQR).

Belongs to the phosphofructokinase type A (PFKA) family. ATP-dependent PFK group I subfamily. Prokaryotic clade 'B1' sub-subfamily. As to quaternary structure, homotetramer. Mg(2+) is required as a cofactor.

The protein localises to the cytoplasm. It catalyses the reaction beta-D-fructose 6-phosphate + ATP = beta-D-fructose 1,6-bisphosphate + ADP + H(+). It participates in carbohydrate degradation; glycolysis; D-glyceraldehyde 3-phosphate and glycerone phosphate from D-glucose: step 3/4. Allosterically activated by ADP and other diphosphonucleosides, and allosterically inhibited by phosphoenolpyruvate. Catalyzes the phosphorylation of D-fructose 6-phosphate to fructose 1,6-bisphosphate by ATP, the first committing step of glycolysis. The protein is ATP-dependent 6-phosphofructokinase of Clostridium botulinum (strain Alaska E43 / Type E3).